A 288-amino-acid polypeptide reads, in one-letter code: 4-diphosphocytidyl-2-C-methyl-D-erythritol kinase (288 aa).

K12 is an active-site residue. 95–105 serves as a coordination point for ATP; the sequence is PAGGGVGGGSS. D137 is an active-site residue.

Belongs to the GHMP kinase family. IspE subfamily.

It catalyses the reaction 4-CDP-2-C-methyl-D-erythritol + ATP = 4-CDP-2-C-methyl-D-erythritol 2-phosphate + ADP + H(+). The protein operates within isoprenoid biosynthesis; isopentenyl diphosphate biosynthesis via DXP pathway; isopentenyl diphosphate from 1-deoxy-D-xylulose 5-phosphate: step 3/6. In terms of biological role, catalyzes the phosphorylation of the position 2 hydroxy group of 4-diphosphocytidyl-2C-methyl-D-erythritol. This Halorhodospira halophila (strain DSM 244 / SL1) (Ectothiorhodospira halophila (strain DSM 244 / SL1)) protein is 4-diphosphocytidyl-2-C-methyl-D-erythritol kinase.